The sequence spans 275 residues: WIMGHMVNAVPQIDQFVNLGSNALEMDVTFNKDAMPVYTYHGTPCDCLRDCLRWEHFPVFLQELRKATSPGDAKYHEKLVLLLFDLKTGKINNNQANTAGQNVAKQLLQHYWNYGNNGGRAYVILSIPYVEHYELIRGFRETLKKEGHENLMEKVGYDFSGRHKLDTVREAYKKAGVDGHVWQSDGITNCLPLVDDLPRVREAVRNRDSPDGFINKVYYWTVDKVATTKKALGAGVDGVMTNHPDVIVNVLNESGYNDKYRLATYDDNPWETFRN.

His5 is an active-site residue. Glu25 and Asp27 together coordinate Mg(2+). The Nucleophile role is filled by His41. 2 disulfide bridges follow: Cys45/Cys51 and Cys47/Cys190. Residue Asp85 coordinates Mg(2+). Asn252 carries an N-linked (GlcNAc...) asparagine glycan.

Belongs to the arthropod phospholipase D family. Class II subfamily. It depends on Mg(2+) as a cofactor. Expressed by the venom gland.

Its subcellular location is the secreted. It carries out the reaction an N-(acyl)-sphingosylphosphocholine = an N-(acyl)-sphingosyl-1,3-cyclic phosphate + choline. The catalysed reaction is an N-(acyl)-sphingosylphosphoethanolamine = an N-(acyl)-sphingosyl-1,3-cyclic phosphate + ethanolamine. The enzyme catalyses a 1-acyl-sn-glycero-3-phosphocholine = a 1-acyl-sn-glycero-2,3-cyclic phosphate + choline. It catalyses the reaction a 1-acyl-sn-glycero-3-phosphoethanolamine = a 1-acyl-sn-glycero-2,3-cyclic phosphate + ethanolamine. Dermonecrotic toxins cleave the phosphodiester linkage between the phosphate and headgroup of certain phospholipids (sphingolipid and lysolipid substrates), forming an alcohol (often choline) and a cyclic phosphate. This toxin acts on sphingomyelin (SM). It may also act on ceramide phosphoethanolamine (CPE), lysophosphatidylcholine (LPC) and lysophosphatidylethanolamine (LPE), but not on lysophosphatidylserine (LPS), and lysophosphatidylglycerol (LPG). It acts by transphosphatidylation, releasing exclusively cyclic phosphate products as second products. Induces dermonecrosis, hemolysis, increased vascular permeability, edema, inflammatory response, and platelet aggregation. This chain is Dermonecrotic toxin LarSicTox-alphaIII1, found in Loxosceles arizonica (Arizona brown spider).